Consider the following 346-residue polypeptide: Elongation factor Ts (346 aa).

Residues T80–V83 form an involved in Mg(2+) ion dislocation from EF-Tu region.

It belongs to the EF-Ts family.

The protein localises to the cytoplasm. Its function is as follows. Associates with the EF-Tu.GDP complex and induces the exchange of GDP to GTP. It remains bound to the aminoacyl-tRNA.EF-Tu.GTP complex up to the GTP hydrolysis stage on the ribosome. This Streptococcus suis (strain 98HAH33) protein is Elongation factor Ts.